We begin with the raw amino-acid sequence, 199 residues long: Recombination protein RecR (199 aa).

The C4-type zinc finger occupies 57-72 (CSVCGNLTDDDPCNIC). In terms of domain architecture, Toprim spans 80–176 (STVLVVEDSK…TVTRLARGLA (97 aa)).

The protein belongs to the RecR family.

In terms of biological role, may play a role in DNA repair. It seems to be involved in an RecBC-independent recombinational process of DNA repair. It may act with RecF and RecO. The sequence is that of Recombination protein RecR from Streptococcus mutans serotype c (strain ATCC 700610 / UA159).